Reading from the N-terminus, the 694-residue chain is Ribonuclease R (694 aa).

An RNB domain is found at 204–525 (RKDLRDLLCF…IVHRLLFHPL (322 aa)). One can recognise an S1 motif domain in the interval 571–648 (ATLYKAFIIT…LTQSIEWTLV (78 aa)). A disordered region spans residues 652-694 (TKAKAKRTSKKKKTESVTTKEKKKSPAKKKKGATKTKKGSGKN). Composition is skewed to basic residues over residues 654–664 (AKAKRTSKKKK) and 672–694 (EKKKSPAKKKKGATKTKKGSGKN).

This sequence belongs to the RNR ribonuclease family. RNase R subfamily.

The protein localises to the cytoplasm. The catalysed reaction is Exonucleolytic cleavage in the 3'- to 5'-direction to yield nucleoside 5'-phosphates.. 3'-5' exoribonuclease that releases 5'-nucleoside monophosphates and is involved in maturation of structured RNAs. This is Ribonuclease R from Chlamydia trachomatis serovar D (strain ATCC VR-885 / DSM 19411 / UW-3/Cx).